The sequence spans 185 residues: Tetratricopeptide repeat protein 36 homolog (185 aa).

3 TPR repeats span residues 53–86 (SREL…AQRA), 88–119 (VLNN…ASDQ), and 125–158 (CHAH…GSKF).

This sequence belongs to the TTC36 family.

The protein is Tetratricopeptide repeat protein 36 homolog of Drosophila pseudoobscura pseudoobscura (Fruit fly).